A 335-amino-acid chain; its full sequence is Holliday junction branch migration complex subunit RuvB (335 aa).

Residues 4–184 form a large ATPase domain (RuvB-L) region; that stretch reads ADRIISSNAQ…FGIVQRLEFY (181 aa). ATP-binding positions include isoleucine 23, arginine 24, glycine 65, lysine 68, threonine 69, threonine 70, 131 to 133, arginine 174, tyrosine 184, and arginine 221; that span reads EDY. Threonine 69 contacts Mg(2+). The tract at residues 185-255 is small ATPAse domain (RuvB-S); it reads SVEDLTSIVA…IAKSALSMLD (71 aa). The head domain (RuvB-H) stretch occupies residues 258–335; that stretch reads QAGFDYLDRK…RHFGLDKLTE (78 aa). Residues arginine 294, arginine 313, and arginine 318 each coordinate DNA.

This sequence belongs to the RuvB family. Homohexamer. Forms an RuvA(8)-RuvB(12)-Holliday junction (HJ) complex. HJ DNA is sandwiched between 2 RuvA tetramers; dsDNA enters through RuvA and exits via RuvB. An RuvB hexamer assembles on each DNA strand where it exits the tetramer. Each RuvB hexamer is contacted by two RuvA subunits (via domain III) on 2 adjacent RuvB subunits; this complex drives branch migration. In the full resolvosome a probable DNA-RuvA(4)-RuvB(12)-RuvC(2) complex forms which resolves the HJ.

It localises to the cytoplasm. It catalyses the reaction ATP + H2O = ADP + phosphate + H(+). Functionally, the RuvA-RuvB-RuvC complex processes Holliday junction (HJ) DNA during genetic recombination and DNA repair, while the RuvA-RuvB complex plays an important role in the rescue of blocked DNA replication forks via replication fork reversal (RFR). RuvA specifically binds to HJ cruciform DNA, conferring on it an open structure. The RuvB hexamer acts as an ATP-dependent pump, pulling dsDNA into and through the RuvAB complex. RuvB forms 2 homohexamers on either side of HJ DNA bound by 1 or 2 RuvA tetramers; 4 subunits per hexamer contact DNA at a time. Coordinated motions by a converter formed by DNA-disengaged RuvB subunits stimulates ATP hydrolysis and nucleotide exchange. Immobilization of the converter enables RuvB to convert the ATP-contained energy into a lever motion, pulling 2 nucleotides of DNA out of the RuvA tetramer per ATP hydrolyzed, thus driving DNA branch migration. The RuvB motors rotate together with the DNA substrate, which together with the progressing nucleotide cycle form the mechanistic basis for DNA recombination by continuous HJ branch migration. Branch migration allows RuvC to scan DNA until it finds its consensus sequence, where it cleaves and resolves cruciform DNA. The protein is Holliday junction branch migration complex subunit RuvB of Mannheimia succiniciproducens (strain KCTC 0769BP / MBEL55E).